Here is a 306-residue protein sequence, read N- to C-terminus: Homoserine kinase (306 aa).

90-100 (PLARGLGSSAS) lines the ATP pocket.

Belongs to the GHMP kinase family. Homoserine kinase subfamily.

Its subcellular location is the cytoplasm. The enzyme catalyses L-homoserine + ATP = O-phospho-L-homoserine + ADP + H(+). It functions in the pathway amino-acid biosynthesis; L-threonine biosynthesis; L-threonine from L-aspartate: step 4/5. Catalyzes the ATP-dependent phosphorylation of L-homoserine to L-homoserine phosphate. The chain is Homoserine kinase from Staphylococcus epidermidis (strain ATCC 12228 / FDA PCI 1200).